We begin with the raw amino-acid sequence, 401 residues long: L-rhamnonate dehydratase (401 aa).

Substrate-binding residues include His29 and Arg55. Mg(2+)-binding residues include Asp222, Glu248, and Glu276. Residue His325 is the Proton acceptor of the active site. Residue Glu345 participates in substrate binding.

This sequence belongs to the mandelate racemase/muconate lactonizing enzyme family. RhamD subfamily. In terms of assembly, homooctamer; tetramer of dimers. It depends on Mg(2+) as a cofactor.

It carries out the reaction L-rhamnonate = 2-dehydro-3-deoxy-L-rhamnonate + H2O. In terms of biological role, catalyzes the dehydration of L-rhamnonate to 2-keto-3-deoxy-L-rhamnonate (KDR). This chain is L-rhamnonate dehydratase, found in Salmonella heidelberg (strain SL476).